The sequence spans 155 residues: Small ribosomal subunit protein uS7c (155 aa).

Belongs to the universal ribosomal protein uS7 family. In terms of assembly, part of the 30S ribosomal subunit.

It localises to the plastid. Its subcellular location is the chloroplast. Functionally, one of the primary rRNA binding proteins, it binds directly to 16S rRNA where it nucleates assembly of the head domain of the 30S subunit. This is Small ribosomal subunit protein uS7c (rps7) from Cornus mas (Cornelian cherry dogwood).